The sequence spans 241 residues: Uridylate kinase (241 aa).

ATP is bound at residue 14-17; it reads KASG. Residues 22-27 are involved in allosteric activation by GTP; sequence GDQGFG. Position 56 (glycine 56) interacts with UMP. The ATP site is built by glycine 57 and arginine 61. UMP-binding positions include aspartate 76 and 137 to 144; that span reads TGNPFFTT. 4 residues coordinate ATP: threonine 164, glutamine 165, tyrosine 170, and aspartate 173.

The protein belongs to the UMP kinase family. As to quaternary structure, homohexamer.

It is found in the cytoplasm. It carries out the reaction UMP + ATP = UDP + ADP. The protein operates within pyrimidine metabolism; CTP biosynthesis via de novo pathway; UDP from UMP (UMPK route): step 1/1. Its activity is regulated as follows. Allosterically activated by GTP. Inhibited by UTP. Catalyzes the reversible phosphorylation of UMP to UDP. The polypeptide is Uridylate kinase (Agrobacterium fabrum (strain C58 / ATCC 33970) (Agrobacterium tumefaciens (strain C58))).